Consider the following 269-residue polypeptide: NAD kinase (269 aa).

The active-site Proton acceptor is D45. NAD(+) contacts are provided by residues 45-46, 122-123, R149, D151, and A186; these read DG and NE.

It belongs to the NAD kinase family. The cofactor is a divalent metal cation.

It is found in the cytoplasm. The catalysed reaction is NAD(+) + ATP = ADP + NADP(+) + H(+). Involved in the regulation of the intracellular balance of NAD and NADP, and is a key enzyme in the biosynthesis of NADP. Catalyzes specifically the phosphorylation on 2'-hydroxyl of the adenosine moiety of NAD to yield NADP. The chain is NAD kinase from Staphylococcus saprophyticus subsp. saprophyticus (strain ATCC 15305 / DSM 20229 / NCIMB 8711 / NCTC 7292 / S-41).